The sequence spans 651 residues: Peptide-N(4)-(N-acetyl-beta-glucosaminyl)asparagine amidase (651 aa).

A PUB domain is found at 29-90 (EASRLLLTYA…EGETHMVFPK (62 aa)). Zn(2+)-binding residues include cysteine 246, cysteine 249, cysteine 279, and cysteine 282. Cysteine 305 acts as the Nucleophile in catalysis. Catalysis depends on residues histidine 332 and aspartate 349. Residues 450-651 (EFGGRTSGSM…LEMIIKLADL (202 aa)) form the PAW domain.

The protein belongs to the transglutaminase-like superfamily. PNGase family. Requires Zn(2+) as cofactor.

The protein localises to the cytoplasm. It catalyses the reaction Hydrolysis of an N(4)-(acetyl-beta-D-glucosaminyl)asparagine residue in which the glucosamine residue may be further glycosylated, to yield a (substituted) N-acetyl-beta-D-glucosaminylamine and a peptide containing an aspartate residue.. Its function is as follows. Specifically deglycosylates the denatured form of N-linked glycoproteins in the cytoplasm and assists their proteasome-mediated degradation. Cleaves the beta-aspartyl-glucosamine (GlcNAc) of the glycan and the amide side chain of Asn, converting Asn to Asp. Prefers proteins containing high-mannose over those bearing complex type oligosaccharides. Can recognize misfolded proteins in the endoplasmic reticulum that are exported to the cytosol to be destroyed and deglycosylate them, while it has no activity toward native proteins. Deglycosylation is a prerequisite for subsequent proteasome-mediated degradation of some, but not all, misfolded glycoproteins. The polypeptide is Peptide-N(4)-(N-acetyl-beta-glucosaminyl)asparagine amidase (NGLY1) (Gallus gallus (Chicken)).